The primary structure comprises 110 residues: Large ribosomal subunit protein uL22 (110 aa).

Belongs to the universal ribosomal protein uL22 family. As to quaternary structure, part of the 50S ribosomal subunit.

In terms of biological role, this protein binds specifically to 23S rRNA; its binding is stimulated by other ribosomal proteins, e.g. L4, L17, and L20. It is important during the early stages of 50S assembly. It makes multiple contacts with different domains of the 23S rRNA in the assembled 50S subunit and ribosome. Functionally, the globular domain of the protein is located near the polypeptide exit tunnel on the outside of the subunit, while an extended beta-hairpin is found that lines the wall of the exit tunnel in the center of the 70S ribosome. The sequence is that of Large ribosomal subunit protein uL22 from Pasteurella multocida (strain Pm70).